Here is a 144-residue protein sequence, read N- to C-terminus: Large ribosomal subunit protein uL15 (144 aa).

Residues 1–56 form a disordered region; it reads MELNNLKPAAGAKHAKRRVGRGIGSGLGKTAGRGHKGQKSRSGGFHKVGFEGGQMP. Over residues 21–31 the composition is skewed to gly residues; the sequence is RGIGSGLGKTA.

Belongs to the universal ribosomal protein uL15 family. As to quaternary structure, part of the 50S ribosomal subunit.

Functionally, binds to the 23S rRNA. This Burkholderia multivorans (strain ATCC 17616 / 249) protein is Large ribosomal subunit protein uL15.